The primary structure comprises 450 residues: tRNA-2-methylthio-N(6)-dimethylallyladenosine synthase (450 aa).

Residues 2–119 (KKVFVKTYGC…LPDLIARRQR (118 aa)) enclose the MTTase N-terminal domain. [4Fe-4S] cluster-binding residues include Cys11, Cys48, Cys82, Cys156, Cys160, and Cys163. One can recognise a Radical SAM core domain in the interval 142–375 (RVEGPSAFVS…QATIEENVQR (234 aa)). Residues 378-448 (QGMVGTVQRI…PHSLRGEIVV (71 aa)) enclose the TRAM domain.

Belongs to the methylthiotransferase family. MiaB subfamily. As to quaternary structure, monomer. [4Fe-4S] cluster is required as a cofactor.

It localises to the cytoplasm. It carries out the reaction N(6)-dimethylallyladenosine(37) in tRNA + (sulfur carrier)-SH + AH2 + 2 S-adenosyl-L-methionine = 2-methylsulfanyl-N(6)-dimethylallyladenosine(37) in tRNA + (sulfur carrier)-H + 5'-deoxyadenosine + L-methionine + A + S-adenosyl-L-homocysteine + 2 H(+). In terms of biological role, catalyzes the methylthiolation of N6-(dimethylallyl)adenosine (i(6)A), leading to the formation of 2-methylthio-N6-(dimethylallyl)adenosine (ms(2)i(6)A) at position 37 in tRNAs that read codons beginning with uridine. This Cupriavidus taiwanensis (strain DSM 17343 / BCRC 17206 / CCUG 44338 / CIP 107171 / LMG 19424 / R1) (Ralstonia taiwanensis (strain LMG 19424)) protein is tRNA-2-methylthio-N(6)-dimethylallyladenosine synthase.